Reading from the N-terminus, the 933-residue chain is Isoleucine--tRNA ligase (933 aa).

The 'HIGH' region motif lies at 57 to 67; it reads PYANGNIHVGH. Glutamate 554 provides a ligand contact to L-isoleucyl-5'-AMP. The 'KMSKS' region signature appears at 595-599; the sequence is KMSKS. An ATP-binding site is contributed by lysine 598.

Belongs to the class-I aminoacyl-tRNA synthetase family. IleS type 1 subfamily. In terms of assembly, monomer.

The protein resides in the cytoplasm. The catalysed reaction is tRNA(Ile) + L-isoleucine + ATP = L-isoleucyl-tRNA(Ile) + AMP + diphosphate. Catalyzes the attachment of isoleucine to tRNA(Ile). As IleRS can inadvertently accommodate and process structurally similar amino acids such as valine, to avoid such errors it has two additional distinct tRNA(Ile)-dependent editing activities. One activity is designated as 'pretransfer' editing and involves the hydrolysis of activated Val-AMP. The other activity is designated 'posttransfer' editing and involves deacylation of mischarged Val-tRNA(Ile). This Streptococcus pyogenes serotype M1 protein is Isoleucine--tRNA ligase.